The following is a 378-amino-acid chain: Erythronate-4-phosphate dehydrogenase (378 aa).

Substrate is bound by residues serine 45 and threonine 66. Residues aspartate 146 and threonine 175 each coordinate NAD(+). Residue arginine 208 is part of the active site. Aspartate 232 is an NAD(+) binding site. Glutamate 237 is a catalytic residue. Residue histidine 254 is the Proton donor of the active site. Glycine 257 contributes to the NAD(+) binding site. Tyrosine 258 serves as a coordination point for substrate.

The protein belongs to the D-isomer specific 2-hydroxyacid dehydrogenase family. PdxB subfamily. Homodimer.

Its subcellular location is the cytoplasm. The enzyme catalyses 4-phospho-D-erythronate + NAD(+) = (R)-3-hydroxy-2-oxo-4-phosphooxybutanoate + NADH + H(+). The protein operates within cofactor biosynthesis; pyridoxine 5'-phosphate biosynthesis; pyridoxine 5'-phosphate from D-erythrose 4-phosphate: step 2/5. Its function is as follows. Catalyzes the oxidation of erythronate-4-phosphate to 3-hydroxy-2-oxo-4-phosphonooxybutanoate. The chain is Erythronate-4-phosphate dehydrogenase from Escherichia coli O157:H7.